The sequence spans 290 residues: Arylamine N-acetyltransferase, pineal gland isozyme NAT-3 (290 aa).

Cysteine 68 (acyl-thioester intermediate) is an active-site residue. Residues histidine 107 and aspartate 122 contribute to the active site.

Belongs to the arylamine N-acetyltransferase family.

It catalyses the reaction an arylamine + acetyl-CoA = an N-acetylarylamine + CoA. The enzyme catalyses an N-hydroxyarylamine + acetyl-CoA = an N-acetoxyarylamine + CoA. Its function is as follows. Catalyzes the N- or O-acetylation of various arylamine and heterocyclic amine substrates, and participates in the detoxification of a plethora of hydrazine and arylamine drugs. This is Arylamine N-acetyltransferase, pineal gland isozyme NAT-3 from Gallus gallus (Chicken).